Reading from the N-terminus, the 59-residue chain is Large ribosomal subunit protein bL32 (59 aa).

The disordered stretch occupies residues 1–40; that stretch reads MAVQQNKKSPSKRGMHRSHDFLRTTPLSVDPGTGEVHLRH.

Belongs to the bacterial ribosomal protein bL32 family.

This is Large ribosomal subunit protein bL32 from Nitrosospira multiformis (strain ATCC 25196 / NCIMB 11849 / C 71).